We begin with the raw amino-acid sequence, 345 residues long: Inositol phosphoceramide mannosyltransferase 2 (345 aa).

Residues 4-24 form a helical membrane-spanning segment; sequence VIYKFAVFAAVNFFLMSSIVL. Asn-55 carries N-linked (GlcNAc...) asparagine glycosylation. The helical transmembrane segment at 220-240 threads the bilayer; the sequence is YWLPYLTIMLSTGPLSISFLW. N-linked (GlcNAc...) asparagine glycosylation is present at Asn-269. A helical transmembrane segment spans residues 296 to 316; it reads LAYVIVAGFCLYFILSYMFFS.

The protein belongs to the glycosyltransferase 32 family.

Its subcellular location is the golgi apparatus. It localises to the cis-Golgi network membrane. The protein localises to the trans-Golgi network membrane. Its function is as follows. With imt1 and imt3, is required for the synthesis of mannosyl phosphorylinositol ceramide (MIPC). Catalyzes the addition of mannosyl to phosphorylinositol ceramide (IPC). MIPC is essential for cell morphology, cell-surface distribution of ergosterol, localization for plasma-membrane transporters, and lipid-raft-mediated endocytosis of plasma membrane proteins to the vacuole. The chain is Inositol phosphoceramide mannosyltransferase 2 from Schizosaccharomyces pombe (strain 972 / ATCC 24843) (Fission yeast).